The chain runs to 370 residues: Pyruvate dehydrogenase E1 component subunit alpha (370 aa).

Heterodimer of an alpha and a beta chain. Thiamine diphosphate is required as a cofactor.

The enzyme catalyses N(6)-[(R)-lipoyl]-L-lysyl-[protein] + pyruvate + H(+) = N(6)-[(R)-S(8)-acetyldihydrolipoyl]-L-lysyl-[protein] + CO2. Its function is as follows. The pyruvate dehydrogenase complex catalyzes the overall conversion of pyruvate to acetyl-CoA and CO(2). It contains multiple copies of three enzymatic components: pyruvate dehydrogenase (E1), dihydrolipoamide acetyltransferase (E2) and lipoamide dehydrogenase (E3). This is Pyruvate dehydrogenase E1 component subunit alpha (pdhA) from Staphylococcus aureus (strain MRSA252).